Reading from the N-terminus, the 201-residue chain is Transgelin (201 aa).

The residue at position 2 (A2) is an N-acetylalanine. The Calponin-homology (CH) domain maps to 24 to 137 (EELEERLVEW…RTLMALGSLA (114 aa)). S166 carries the phosphoserine modification. K172 is modified (N6-acetyllysine). A Calponin-like repeat occupies 175–200 (IGLQMGSNRGASQAGMTGYGRPRQII). Position 181 is a phosphoserine (S181). An Omega-N-methylarginine modification is found at R183.

Belongs to the calponin family.

The protein resides in the cytoplasm. In terms of biological role, actin cross-linking/gelling protein. This is Transgelin (Tagln) from Mus musculus (Mouse).